We begin with the raw amino-acid sequence, 158 residues long: Hypoxanthine DNA glycosylase (158 aa).

Residue asparagine 39 is part of the active site.

Belongs to the uracil-DNA glycosylase (UDG) superfamily. Type 6 (HDG) family.

Its function is as follows. Excises hypoxanthine, a deamination product of adenine, from double-stranded DNA. Acts on double-stranded DNA containing G/I, T/I, A/I and C/I base pairs, but not on single-stranded inosine-containing DNA. Also has minor xanthine DNA glycosylase activity. Lacks any detectable uracil-DNA glycosylase activity. The polypeptide is Hypoxanthine DNA glycosylase (Methanosarcina acetivorans (strain ATCC 35395 / DSM 2834 / JCM 12185 / C2A)).